The following is a 455-amino-acid chain: Histone chaperone RTT106 (455 aa).

Ser-2 bears the N-acetylserine mark. A dimeric region region spans residues 2–67; sequence SKLFLDELPE…SSDLLKTDEI (66 aa). PH domains lie at 68–200 and 217–301; these read SETN…GFKI and INSF…VKRK. Residues 68–301 form a double PH domain region; sequence SETNTIFKLE…AKIDDYVKRK (234 aa). Positions 305–314 are enriched in basic and acidic residues; the sequence is DKSMSEELKA. Positions 305 to 455 are disordered; that stretch reads DKSMSEELKA…DEDGSGVEYD (151 aa). The segment covering 319 to 339 has biased composition (polar residues); sequence KGQATDGTADQPSILQEATRQ. Acidic residues-rich tracts occupy residues 350–366 and 376–395; these read SDDD…ESDL and DGAE…DEEE. Over residues 402–418 the composition is skewed to polar residues; that stretch reads ALNRDNSFASINGQPEQ. 2 positions are modified to phosphoserine: Ser-408 and Ser-411. Residues 420-429 show a composition bias toward basic and acidic residues; it reads LQYKEFKEPL. Over residues 430-455 the composition is skewed to acidic residues; sequence ELEDIPIEIDNDDDEDDEDGSGVEYD. Ser-450 is subject to Phosphoserine.

This sequence belongs to the RTT106 family. Homodimers (via the N-terminal domain). Interacts with the SWI/SNF complex. Interacts with the RSC complex. Interacts with the HIR complex. Interacts with the CAF-1 complex. Interacts with RLF2. Interacts with SIR4. Interacts with YTA7. Interacts with CAC2. Interacts with HPC2. Interacts with HIR2. Interacts with MSI1. Interacts with HIR1. Interacts with histone H3. Interacts with histone H4.

The protein localises to the nucleus. It localises to the chromosome. Histones H3 and H4 chaperone involved in the nucleosome formation and heterochromatin silencing. Required for the deposition of H3K56ac-carrying H3-H4 complex onto newly-replicated DNA. Plays a role in the transcriptional regulation of the cell-cycle dependent histone genes by directly recruiting the SWI/SNF and RSC chromatin remodeling complexes to the histone genes in a cell cycle dependent manner. In cooperation with HIR and ASF1, creates a repressive structure at the core histone gene promoter and contributes to their repression outside of S phase. Involved in regulation of Ty1 transposition. This is Histone chaperone RTT106 from Saccharomyces cerevisiae (strain ATCC 204508 / S288c) (Baker's yeast).